We begin with the raw amino-acid sequence, 444 residues long: Phosphoglucosamine mutase (444 aa).

The Phosphoserine intermediate role is filled by Ser102. Positions 102, 241, 243, and 245 each coordinate Mg(2+). A Phosphoserine modification is found at Ser102.

The protein belongs to the phosphohexose mutase family. It depends on Mg(2+) as a cofactor. Activated by phosphorylation.

The enzyme catalyses alpha-D-glucosamine 1-phosphate = D-glucosamine 6-phosphate. Its function is as follows. Catalyzes the conversion of glucosamine-6-phosphate to glucosamine-1-phosphate. The chain is Phosphoglucosamine mutase from Acidovorax sp. (strain JS42).